We begin with the raw amino-acid sequence, 371 residues long: tRNA-specific 2-thiouridylase MnmA (371 aa).

ATP is bound by residues 13–20 (GMSGGVDS) and Met39. Positions 99 to 101 (NPD) are interaction with target base in tRNA. Catalysis depends on Cys104, which acts as the Nucleophile. A disulfide bridge connects residues Cys104 and Cys200. Position 128 (Gly128) interacts with ATP. The tract at residues 150 to 152 (KDQ) is interaction with tRNA. Cys200 functions as the Cysteine persulfide intermediate in the catalytic mechanism. The interval 308–309 (RY) is interaction with tRNA.

This sequence belongs to the MnmA/TRMU family.

It localises to the cytoplasm. It carries out the reaction S-sulfanyl-L-cysteinyl-[protein] + uridine(34) in tRNA + AH2 + ATP = 2-thiouridine(34) in tRNA + L-cysteinyl-[protein] + A + AMP + diphosphate + H(+). Catalyzes the 2-thiolation of uridine at the wobble position (U34) of tRNA, leading to the formation of s(2)U34. The chain is tRNA-specific 2-thiouridylase MnmA from Listeria monocytogenes serotype 4b (strain CLIP80459).